The following is a 524-amino-acid chain: MGKPARKGCEWKRFLKNNWVLLSTVAAVVLGITTGVLVREHSNLSTLEKFYFAFPGEILMRMLKLIILPLIISSMITGVAALDSNVSGKIGLRAVVYYFCTTLIAVILGIVLVVSIKPGVTQKVGEIARTGSTPEVSTVDAMLDLIRNMFPENLVQACFQQYKTKREEVKPPSDPEMNMTEESFTAVMTTAISKNKTKEYKIVGMYSDGINVLGLIVFCLVFGLVIGKMGEKGQILVDFFNALSDATMKIVQIIMCYMPLGILFLIAGKIIEVEDWEIFRKLGLYMATVLTGLAIHSIVILPLIYFIVVRKNPFRFAMGMAQALLTALMISSSSATLPVTFRCAEENNQVDKRITRFVLPVGATINMDGTALYEAVAAVFIAQLNDLDLGIGQIITISITATSASIGAAGVPQAGLVTMVIVLSAVGLPAEDVTLIIAVDWLLDRFRTMVNVLGDAFGTGIVEKLSKKELEQMDVSSEVNIVNPFALESTILDNEDSDTKKSYVNGGFAVDKSDTISFTQTSQF.

The Cytoplasmic segment spans residues 1–18; sequence MGKPARKGCEWKRFLKNN. The chain crosses the membrane as a helical span at residues 19–38; that stretch reads WVLLSTVAAVVLGITTGVLV. The Extracellular portion of the chain corresponds to 39–61; sequence REHSNLSTLEKFYFAFPGEILMR. N-linked (GlcNAc...) asparagine glycosylation occurs at N43. Residues 62–82 traverse the membrane as a helical segment; it reads MLKLIILPLIISSMITGVAAL. At 83 to 93 the chain is on the cytoplasmic side; sequence DSNVSGKIGLR. A helical membrane pass occupies residues 94–114; it reads AVVYYFCTTLIAVILGIVLVV. Na(+) is bound by residues Y98, T101, and T102. At 115 to 205 the chain is on the extracellular side; the sequence is SIKPGVTQKV…KTKEYKIVGM (91 aa). N178 and N195 each carry an N-linked (GlcNAc...) asparagine glycan. A helical membrane pass occupies residues 206 to 229; the sequence is YSDGINVLGLIVFCLVFGLVIGKM. Topologically, residues 230–238 are cytoplasmic; the sequence is GEKGQILVD. Residues 239-266 form a helical membrane-spanning segment; the sequence is FFNALSDATMKIVQIIMCYMPLGILFLI. Topologically, residues 267 to 286 are extracellular; the sequence is AGKIIEVEDWEIFRKLGLYM. Residues 287 to 308 traverse the membrane as a helical segment; it reads ATVLTGLAIHSIVILPLIYFIV. The Cytoplasmic segment spans residues 309–313; it reads VRKNP. Positions 314 to 344 form an intramembrane region, discontinuously helical; that stretch reads FRFAMGMAQALLTALMISSSSATLPVTFRCA. Positions 331 and 333 each coordinate L-aspartate. The Cytoplasmic segment spans residues 345 to 353; the sequence is EENNQVDKR. A helical membrane pass occupies residues 354–380; that stretch reads ITRFVLPVGATINMDGTALYEAVAAVF. Residues G362, T364, N366, and D368 each contribute to the Na(+) site. Residue T370 participates in L-aspartate binding. Residues 381–393 are Extracellular-facing; the sequence is IAQLNDLDLGIGQ. Positions 394-427 form an intramembrane region, discontinuously helical; it reads IITISITATSASIGAAGVPQAGLVTMVIVLSAVG. Na(+)-binding residues include S405, I406, and A408. L-aspartate is bound at residue V411. Topologically, residues 428 to 440 are extracellular; it reads LPAEDVTLIIAVD. Residues 441–462 form a helical membrane-spanning segment; the sequence is WLLDRFRTMVNVLGDAFGTGIV. R447, T448, and N451 together coordinate L-aspartate. 2 residues coordinate Na(+): N451 and D455. At 463–524 the chain is on the cytoplasmic side; it reads EKLSKKELEQ…TISFTQTSQF (62 aa). A phosphoserine mark is found at S517 and S522.

The protein belongs to the dicarboxylate/amino acid:cation symporter (DAACS) (TC 2.A.23) family. SLC1A1 subfamily. Homotrimer. Interacts with ARL6IP5. Interacts with RTN2 (via N-terminus); the interaction promotes cell surface expression of SLC1A1. Interacts with SORCS2; this interaction is important for normal expression at the cell membrane. Glycosylated. As to expression, expressed in all tissues tested including liver, muscle, testis, ovary, retinoblastoma cell line, neurons and brain (in which there was dense expression in substantia nigra, red nucleus, hippocampus and in cerebral cortical layers).

It is found in the cell membrane. The protein localises to the apical cell membrane. Its subcellular location is the synapse. The protein resides in the synaptosome. It localises to the early endosome membrane. It is found in the late endosome membrane. The protein localises to the recycling endosome membrane. The catalysed reaction is K(+)(in) + L-glutamate(out) + 3 Na(+)(out) + H(+)(out) = K(+)(out) + L-glutamate(in) + 3 Na(+)(in) + H(+)(in). It catalyses the reaction K(+)(in) + L-aspartate(out) + 3 Na(+)(out) + H(+)(out) = K(+)(out) + L-aspartate(in) + 3 Na(+)(in) + H(+)(in). It carries out the reaction D-aspartate(out) + K(+)(in) + 3 Na(+)(out) + H(+)(out) = D-aspartate(in) + K(+)(out) + 3 Na(+)(in) + H(+)(in). The enzyme catalyses K(+)(in) + L-cysteine(out) + 3 Na(+)(out) + H(+)(out) = K(+)(out) + L-cysteine(in) + 3 Na(+)(in) + H(+)(in). In terms of biological role, sodium-dependent, high-affinity amino acid transporter that mediates the uptake of L-glutamate and also L-aspartate and D-aspartate. Can also transport L-cysteine. Functions as a symporter that transports one amino acid molecule together with two or three Na(+) ions and one proton, in parallel with the counter-transport of one K(+) ion. Mediates Cl(-) flux that is not coupled to amino acid transport; this avoids the accumulation of negative charges due to aspartate and Na(+) symport. Plays an important role in L-glutamate and L-aspartate reabsorption in renal tubuli. Plays a redundant role in the rapid removal of released glutamate from the synaptic cleft, which is essential for terminating the postsynaptic action of glutamate. Contributes to glutathione biosynthesis and protection against oxidative stress via its role in L-glutamate and L-cysteine transport. Negatively regulated by ARL6IP5. The protein is Excitatory amino acid transporter 3 of Homo sapiens (Human).